A 471-amino-acid polypeptide reads, in one-letter code: G2/mitotic-specific cyclin-1 (471 aa).

The protein belongs to the cyclin family. Cyclin AB subfamily.

Functionally, essential for the control of the cell cycle at the G2/M (mitosis) transition. Interacts with the CDC2 protein kinase to form MPF. G2/M cyclins accumulate steadily during G2 and are abruptly destroyed at mitosis. This is G2/mitotic-specific cyclin-1 (CLB1) from Saccharomyces cerevisiae (strain ATCC 204508 / S288c) (Baker's yeast).